The primary structure comprises 326 residues: Flotillin-like protein FloA (326 aa).

Residues 3-23 (FTTIVVILLVIACIVVLFFIG) traverse the membrane as a helical segment.

The protein belongs to the flotillin-like FloA family. In terms of assembly, homooligomerizes.

Its subcellular location is the cell membrane. The protein localises to the membrane raft. In terms of biological role, found in functional membrane microdomains (FMM) that may be equivalent to eukaryotic membrane rafts. FMMs are highly dynamic and increase in number as cells age. Flotillins are thought to be important factors in membrane fluidity. The polypeptide is Flotillin-like protein FloA (Desulforapulum autotrophicum (strain ATCC 43914 / DSM 3382 / VKM B-1955 / HRM2) (Desulfobacterium autotrophicum)).